Reading from the N-terminus, the 157-residue chain is Ribosomal RNA large subunit methyltransferase H (157 aa).

Residues leucine 73, glycine 105, and 124 to 129 (LSRMTF) contribute to the S-adenosyl-L-methionine site.

It belongs to the RNA methyltransferase RlmH family. As to quaternary structure, homodimer.

The protein localises to the cytoplasm. The enzyme catalyses pseudouridine(1915) in 23S rRNA + S-adenosyl-L-methionine = N(3)-methylpseudouridine(1915) in 23S rRNA + S-adenosyl-L-homocysteine + H(+). In terms of biological role, specifically methylates the pseudouridine at position 1915 (m3Psi1915) in 23S rRNA. This is Ribosomal RNA large subunit methyltransferase H from Porphyromonas gingivalis (strain ATCC 33277 / DSM 20709 / CIP 103683 / JCM 12257 / NCTC 11834 / 2561).